Reading from the N-terminus, the 533-residue chain is Calcium-dependent protein kinase 8 (533 aa).

The disordered stretch occupies residues 1–21; that stretch reads MGNCCASPGSETGSKKGKPKI. G2 carries N-myristoyl glycine lipidation. The Protein kinase domain occupies 57–315; the sequence is YDLGREVGRG…AAQVLEHSWI (259 aa). ATP is bound by residues 63 to 71 and K86; that span reads VGRGEFGIT. Residue D181 is the Proton acceptor of the active site. S221 carries the phosphoserine modification. The autoinhibitory domain stretch occupies residues 321-351; sequence APNVSLGETVKARLKQFSVMNKLKKRALRVI. EF-hand domains follow at residues 358 to 394, 395 to 430, 431 to 466, and 467 to 502; these read EEVA…GQQQ, IPDT…LKKM, ANDE…EVDT, and NSEE…GTDW. Positions 371, 375, 377, 382, 408, 410, 412, 414, 419, 444, 446, 448, 450, 455, 480, 482, 484, and 486 each coordinate Ca(2+). A Phosphoserine modification is found at S488. Residue E491 participates in Ca(2+) binding. S526 is subject to Phosphoserine.

It belongs to the protein kinase superfamily. Ser/Thr protein kinase family. CDPK subfamily.

It is found in the cell membrane. The enzyme catalyses L-seryl-[protein] + ATP = O-phospho-L-seryl-[protein] + ADP + H(+). It carries out the reaction L-threonyl-[protein] + ATP = O-phospho-L-threonyl-[protein] + ADP + H(+). Activated by calcium. Autophosphorylation may play an important role in the regulation of the kinase activity. Functionally, may play a role in signal transduction pathways that involve calcium as a second messenger. The chain is Calcium-dependent protein kinase 8 (CPK8) from Arabidopsis thaliana (Mouse-ear cress).